We begin with the raw amino-acid sequence, 470 residues long: Acetyl-CoA decarbonylase/synthase complex subunit gamma (470 aa).

One can recognise a 4Fe-4S domain in the interval 1-62 (MKVKSPLEVY…DPKVKKKLEE (62 aa)). [4Fe-4S] cluster is bound by residues cysteine 18, cysteine 21, cysteine 26, and cysteine 43.

In terms of assembly, heterodimer of delta and gamma chains. The ACDS complex is made up of alpha, epsilon, beta, gamma and delta chains with a probable stoichiometry of (alpha(2)epsilon(2))(4)-beta(8)-(gamma(1)delta(1))(8). Corrinoid is required as a cofactor. [4Fe-4S] cluster serves as cofactor.

It carries out the reaction 5,6,7,8-tetrahydrosarcinapterin + methyl-Co(III)-[corrinoid Fe-S protein] = 5-methyltetrahydrosarcinapterin + Co(I)-[corrinoid Fe-S protein] + H(+). Its function is as follows. Part of a complex that catalyzes the reversible cleavage of acetyl-CoA, allowing autotrophic growth from CO(2). This is Acetyl-CoA decarbonylase/synthase complex subunit gamma from Archaeoglobus fulgidus (strain ATCC 49558 / DSM 4304 / JCM 9628 / NBRC 100126 / VC-16).